Consider the following 135-residue polypeptide: MVHAIFCAHGQLAGAMLDSVCMVYGEVNVSAVAFVPGENAADIAINLEKLVSAHTDEEWVIAVDLQCGSPWNAAAGLAMRHPQIRVISGLSLPLALELVDNQHTLSADDLCQHLQAIASQCCVVWQQPETVEEEF.

One can recognise a PTS EIIA type-4 domain in the interval 1-131; that stretch reads MVHAIFCAHG…CVVWQQPETV (131 aa). Catalysis depends on His-9, which acts as the Tele-phosphohistidine intermediate. A Phosphohistidine; by HPr modification is found at His-9.

The protein resides in the cytoplasm. Its function is as follows. The phosphoenolpyruvate-dependent sugar phosphotransferase system (PTS), a major carbohydrate active transport system, catalyzes the phosphorylation of incoming sugar substrates concomitant with their translocation across the cell membrane. The enzyme II SorABFM PTS system is involved in L-sorbose transport. In Klebsiella pneumoniae, this protein is PTS system sorbose-specific EIIA component.